The sequence spans 365 residues: MSRPVPNPGILDIAPYTPGKSPVAEPGRKVFKLSANETPFGPSPHAIAAYKGAADHLEDYPEGTSRVLREAIGRAYGLDPDRIICGAGSDEILNLLAHTYLGPGDEAIATTYGFLVYPIATMANGAKLVIAEEKNLTCDVDAILAKVSPSTKLVWLANPNNPTGTYVPFDEVKRLRAGLPEHVILVLDGAYADYVGKNDYESGIELVSTTDNTVVTRTFSKIHGLAALRIGWMFGPANIVDAMNRIRGPFNTSVPAQLAAVAAINDTAHVEMSRAHTETWRNWLSEEFTKLGLTVTPSVCNFVLVHFPTAKGKTAADADAFLTKRGLVLRALNNYGLPHALRMTIGTEEANRLVVEAVADFMAQP.

Residues 1 to 23 form a disordered region; it reads MSRPVPNPGILDIAPYTPGKSPV. K221 is modified (N6-(pyridoxal phosphate)lysine).

It belongs to the class-II pyridoxal-phosphate-dependent aminotransferase family. Histidinol-phosphate aminotransferase subfamily. As to quaternary structure, homodimer. It depends on pyridoxal 5'-phosphate as a cofactor.

It catalyses the reaction L-histidinol phosphate + 2-oxoglutarate = 3-(imidazol-4-yl)-2-oxopropyl phosphate + L-glutamate. It participates in amino-acid biosynthesis; L-histidine biosynthesis; L-histidine from 5-phospho-alpha-D-ribose 1-diphosphate: step 7/9. The chain is Histidinol-phosphate aminotransferase from Rhodopseudomonas palustris (strain BisB18).